Here is a 245-residue protein sequence, read N- to C-terminus: Cell division protein ZapD (245 aa).

This sequence belongs to the ZapD family. In terms of assembly, interacts with FtsZ.

It localises to the cytoplasm. In terms of biological role, cell division factor that enhances FtsZ-ring assembly. Directly interacts with FtsZ and promotes bundling of FtsZ protofilaments, with a reduction in FtsZ GTPase activity. The sequence is that of Cell division protein ZapD from Photobacterium profundum (strain SS9).